The chain runs to 146 residues: ATP synthase epsilon chain (146 aa).

The interval 103 to 124 is disordered; that stretch reads QAERELGQLPEEEDEDSRRARE.

It belongs to the ATPase epsilon chain family. As to quaternary structure, F-type ATPases have 2 components, CF(1) - the catalytic core - and CF(0) - the membrane proton channel. CF(1) has five subunits: alpha(3), beta(3), gamma(1), delta(1), epsilon(1). CF(0) has three main subunits: a, b and c.

Its subcellular location is the cell membrane. Its function is as follows. Produces ATP from ADP in the presence of a proton gradient across the membrane. This is ATP synthase epsilon chain from Rubrobacter xylanophilus (strain DSM 9941 / JCM 11954 / NBRC 16129 / PRD-1).